The sequence spans 442 residues: Cell division protein FtsA (442 aa).

The disordered stretch occupies residues 401–428 (VTSYDNDSYDAPEETVYDEPEQKKSDED). Positions 407–419 (DSYDAPEETVYDE) are enriched in acidic residues.

This sequence belongs to the FtsA/MreB family. In terms of assembly, self-interacts. Interacts with FtsZ.

Its subcellular location is the cell membrane. Cell division protein that is involved in the assembly of the Z ring. May serve as a membrane anchor for the Z ring. The polypeptide is Cell division protein FtsA (Enterococcus hirae).